A 334-amino-acid chain; its full sequence is WD repeat-containing protein 54 (334 aa).

WD repeat units follow at residues 116-155 (SSVQ…PNIV), 162-206 (GHQT…TLLT), and 250-289 (AHAR…ESGS).

Homodimer and homotrimer; forms tight forms of dimers and trimers. Interacts with IZUMO1 and IZUMO1R/JUNO. In terms of processing, cross-linked to tightly form both dimers and trimers by TGM2. Cross-linking enhances the activation of EGF receptor-mediated signaling pathway. Cross-linking is inhibited by EGF. Ubiquitinated. EGF increases ubiquitination.

The protein localises to the vesicle. It localises to the cytoplasm. Its subcellular location is the cell membrane. In terms of biological role, plays a role in the adhesion and fusion of the sperm-oocyte membrane through its interactions with IZUMO1 and IZUMO1R/JUNO. When cross-linked to form dimers and trimers, it has a regulatory effect on ERK signaling pathway activity in response to EGF stimulation. Colocalizes with the EGF receptor in WDR54-specific vesicle where it sustains the internalization and controls the degradation of the EGF receptor after EGF stimulation. This is WD repeat-containing protein 54 from Mus musculus (Mouse).